The following is a 146-amino-acid chain: Superoxide dismutase [Mn] 2 (146 aa).

The Mn(2+) site is built by His-42, Asp-126, and His-130.

This sequence belongs to the iron/manganese superoxide dismutase family. Mn(2+) is required as a cofactor.

It catalyses the reaction 2 superoxide + 2 H(+) = H2O2 + O2. In terms of biological role, destroys superoxide anion radicals which are normally produced within the cells and which are toxic to biological systems. The protein is Superoxide dismutase [Mn] 2 (sod2) of Haloferax mediterranei (Halobacterium mediterranei).